A 291-amino-acid chain; its full sequence is Probable L-ascorbate peroxidase 4, peroxisomal (291 aa).

Catalysis depends on histidine 40, which acts as the Proton acceptor. Histidine 160 contacts heme b. 3 residues coordinate K(+): threonine 161, threonine 177, and aspartate 184. A helical transmembrane segment spans residues 263 to 283 (VLAQSAVGVAVAAAVVIVSYL).

Belongs to the peroxidase family. Ascorbate peroxidase subfamily. Requires heme b as cofactor. Expressed in leaves, stems and flowers.

It is found in the peroxisome membrane. The catalysed reaction is L-ascorbate + H2O2 = L-dehydroascorbate + 2 H2O. Functionally, plays a key role in hydrogen peroxide removal. The chain is Probable L-ascorbate peroxidase 4, peroxisomal from Oryza sativa subsp. japonica (Rice).